A 526-amino-acid polypeptide reads, in one-letter code: Lysine--tRNA ligase (526 aa).

The Mg(2+) site is built by E431 and E438.

The protein belongs to the class-II aminoacyl-tRNA synthetase family. Homodimer. It depends on Mg(2+) as a cofactor.

It localises to the cytoplasm. The enzyme catalyses tRNA(Lys) + L-lysine + ATP = L-lysyl-tRNA(Lys) + AMP + diphosphate. This Chlamydia felis (strain Fe/C-56) (Chlamydophila felis) protein is Lysine--tRNA ligase.